A 314-amino-acid chain; its full sequence is DNA-directed RNA polymerase subunit alpha (314 aa).

Residues 1-228 form an alpha N-terminal domain (alpha-NTD) region; that stretch reads MIEIEKPKIE…EHLSIFVNLT (228 aa). The interval 245–314 is alpha C-terminal domain (alpha-CTD); sequence KEKVLEMTIE…DLGLSLRNEN (70 aa).

The protein belongs to the RNA polymerase alpha chain family. Homodimer. The RNAP catalytic core consists of 2 alpha, 1 beta, 1 beta' and 1 omega subunit. When a sigma factor is associated with the core the holoenzyme is formed, which can initiate transcription.

The catalysed reaction is RNA(n) + a ribonucleoside 5'-triphosphate = RNA(n+1) + diphosphate. In terms of biological role, DNA-dependent RNA polymerase catalyzes the transcription of DNA into RNA using the four ribonucleoside triphosphates as substrates. The polypeptide is DNA-directed RNA polymerase subunit alpha (Listeria innocua serovar 6a (strain ATCC BAA-680 / CLIP 11262)).